The sequence spans 757 residues: Protein aardvark (757 aa).

Disordered regions lie at residues 39-63 (SSIN…DSNN), 122-166 (LEEN…SSIL), and 256-285 (SSNG…IESS). The stretch at 121–205 (ILEENNNNNN…FNQFNFLEGI (85 aa)) forms a coiled coil. Composition is skewed to low complexity over residues 125 to 164 (NNNN…SSSS) and 256 to 270 (SSNG…NNNN). Residues 310-356 (QFDIFLIPTEMLVHLLSFLSANDLWRISLTCKRIWYIVDVFKFWELL) form the F-box domain. ARM repeat units follow at residues 454-498 (GGIS…SNDN), 506-548 (GGIQ…VAIE), 549-591 (GGIQ…SAKE), 592-634 (GGIG…ISRQ), 635-678 (NGIQ…IARE), and 679-723 (GGIN…RSGG).

It belongs to the beta-catenin family.

Its subcellular location is the cytoplasm. It localises to the cell junction. In terms of biological role, required to regulate pattern formation during multi-cellular stages of development and for the formation of adherens junctions. Plays a structural role during the regulation of stalk formation. Involved in cell signaling. Required for spore-cell differentiation. Overexpression increases number and size of cell junctions and reduces spore-cell formation. This chain is Protein aardvark (aarA), found in Dictyostelium discoideum (Social amoeba).